Reading from the N-terminus, the 952-residue chain is Protein translocase subunit SecA (952 aa).

Residues Q135, 153–157 (GEGKT), and D575 contribute to the ATP site. The span at 614-624 (RHESRRIDNQL) shows a compositional bias: basic and acidic residues. Disordered stretches follow at residues 614 to 636 (RHESRRIDNQLRGRSGRQGDPGS) and 916 to 946 (VSAKAATQSTTPAAKEIGRNDPCPCGSGKKY). Residues C938, C940, C949, and C950 each coordinate Zn(2+).

The protein belongs to the SecA family. Monomer and homodimer. Part of the essential Sec protein translocation apparatus which comprises SecA, SecYEG and auxiliary proteins SecDF. Other proteins may also be involved. The cofactor is Zn(2+).

Its subcellular location is the cell membrane. It is found in the cytoplasm. The enzyme catalyses ATP + H2O + cellular proteinSide 1 = ADP + phosphate + cellular proteinSide 2.. Part of the Sec protein translocase complex. Interacts with the SecYEG preprotein conducting channel. Has a central role in coupling the hydrolysis of ATP to the transfer of proteins into and across the cell membrane, serving as an ATP-driven molecular motor driving the stepwise translocation of polypeptide chains across the membrane. This chain is Protein translocase subunit SecA, found in Dehalococcoides mccartyi (strain ATCC BAA-2100 / JCM 16839 / KCTC 5957 / BAV1).